The following is a 148-amino-acid chain: Lysozyme C (148 aa).

The first 18 residues, 1–18, serve as a signal peptide directing secretion; that stretch reads MKVLILLGLVLLSVMVQG. The C-type lysozyme domain maps to 19–148; that stretch reads KVFERCELAR…VSQYIQGCGV (130 aa). 4 disulfide bridges follow: Cys-24–Cys-146, Cys-48–Cys-134, Cys-83–Cys-99, and Cys-95–Cys-113. Active-site residues include Glu-53 and Asp-71.

Belongs to the glycosyl hydrolase 22 family. Monomer.

It is found in the secreted. The enzyme catalyses Hydrolysis of (1-&gt;4)-beta-linkages between N-acetylmuramic acid and N-acetyl-D-glucosamine residues in a peptidoglycan and between N-acetyl-D-glucosamine residues in chitodextrins.. Its function is as follows. Lysozymes have primarily a bacteriolytic function; those in tissues and body fluids are associated with the monocyte-macrophage system and enhance the activity of immunoagents. The polypeptide is Lysozyme C (LYZ) (Saguinus oedipus (Cotton-top tamarin)).